The primary structure comprises 301 residues: Homoserine O-acetyltransferase (301 aa).

Residue C142 is the Acyl-thioester intermediate of the active site. Residues K163 and S192 each coordinate substrate. The Proton acceptor role is filled by H235. The active site involves E237. A substrate-binding site is contributed by R249.

Belongs to the MetA family.

It localises to the cytoplasm. It carries out the reaction L-homoserine + acetyl-CoA = O-acetyl-L-homoserine + CoA. The protein operates within amino-acid biosynthesis; L-methionine biosynthesis via de novo pathway; O-acetyl-L-homoserine from L-homoserine: step 1/1. Transfers an acetyl group from acetyl-CoA to L-homoserine, forming acetyl-L-homoserine. The sequence is that of Homoserine O-acetyltransferase from Bacillus subtilis (strain 168).